The sequence spans 804 residues: ABC transporter aclQ (804 aa).

Helical transmembrane passes span 3–23 (LAVLTLALCWAYPVTIYISYL), 52–72 (FTAIFWLQLVQCFDLAISITI), 97–117 (IAVFMFLAAGLLPDPDVPFSP), 119–139 (LSHSHAWIAGIIMEALQLAMF), 155–175 (LQLGLVMVRLVLFVAMVALYF), 206–226 (HGGWLDYVVGFSTLFPFLWPS), 239–259 (FVLLVIQRVVNILVPHQLGIV), 349–369 (LVFQLFPMVADLWIAALYFLI), and 373–393 (AFYSLIVITVTWLYLFVTIYM). An ABC transmembrane type-1 domain is found at 236-518 (IFCFVLLVIQ…FGSFYTQVQN (283 aa)). A glycan (N-linked (GlcNAc...) asparagine) is linked at Asn-460. 2 helical membrane-spanning segments follow: residues 464 to 484 (NLLFTAGVAIVCLLCAYQISA) and 489 to 509 (VAMFVTLLTYLAQLQAPLNFF). The ABC transporter domain occupies 552–786 (VEFTHVNFAY…NGMYSQMWAK (235 aa)). 585 to 592 (GESGSGKS) is an ATP binding site. N-linked (GlcNAc...) asparagine glycans are attached at residues Asn-639 and Asn-797.

The protein belongs to the ABC transporter superfamily. ABCB family. Heavy Metal importer (TC 3.A.1.210) subfamily.

It localises to the membrane. In terms of biological role, ABC transporter; part of the gene cluster that mediates the biosynthesis of aspirochlorine (or antibiotic A30641), an unusual halogenated spiro compound with distinctive antifungal properties due to selective inhibition of protein biosynthesis, and which is also active against bacteria, viruses, and murine tumor cells. This chain is ABC transporter aclQ, found in Aspergillus oryzae (strain ATCC 42149 / RIB 40) (Yellow koji mold).